A 137-amino-acid polypeptide reads, in one-letter code: Glutamate mutase sigma subunit (137 aa).

In terms of domain architecture, B12-binding spans Lys-3 to Lys-137. Adenosylcob(III)alamin-binding positions include Ser-13–Ala-17, His-16, Ser-61–Leu-63, and Asn-93–Gly-97.

The protein belongs to the methylaspartate mutase GlmS subunit family. Heterotetramer composed of 2 epsilon subunits (GlmE) and 2 sigma subunits (GlmS). GlmE exists as a homodimer and GlmS as a monomer. It depends on adenosylcob(III)alamin as a cofactor.

It carries out the reaction (2S,3S)-3-methyl-L-aspartate = L-glutamate. The protein operates within amino-acid degradation; L-glutamate degradation via mesaconate pathway; acetate and pyruvate from L-glutamate: step 1/4. In terms of biological role, catalyzes the carbon skeleton rearrangement of L-glutamate to L-threo-3-methylaspartate ((2S,3S)-3-methylaspartate). This is Glutamate mutase sigma subunit from Clostridium tetani (strain Massachusetts / E88).